Consider the following 352-residue polypeptide: A-type ATP synthase subunit C (352 aa).

The protein belongs to the V-ATPase V0D/AC39 subunit family. As to quaternary structure, has multiple subunits with at least A(3), B(3), C, D, E, F, H, I and proteolipid K(x).

The protein localises to the cell membrane. Functionally, component of the A-type ATP synthase that produces ATP from ADP in the presence of a proton gradient across the membrane. The chain is A-type ATP synthase subunit C from Halobacterium salinarum (strain ATCC 29341 / DSM 671 / R1).